Here is a 119-residue protein sequence, read N- to C-terminus: Large ribosomal subunit protein uL18 (119 aa).

It belongs to the universal ribosomal protein uL18 family. Part of the 50S ribosomal subunit; part of the 5S rRNA/L5/L18/L25 subcomplex. Contacts the 5S and 23S rRNAs.

Functionally, this is one of the proteins that bind and probably mediate the attachment of the 5S RNA into the large ribosomal subunit, where it forms part of the central protuberance. This is Large ribosomal subunit protein uL18 from Nitrosomonas europaea (strain ATCC 19718 / CIP 103999 / KCTC 2705 / NBRC 14298).